A 347-amino-acid polypeptide reads, in one-letter code: NADH-ubiquinone oxidoreductase chain 2 (347 aa).

Helical transmembrane passes span 3-23, 25-45, 59-79, 96-116, 148-170, 178-198, 200-220, 247-267, 276-296, and 326-346; these read PLIL…VMMS, HWLM…PLLM, YFLT…INLL, IIMT…FWVP, GINL…WGGL, ILAY…AFNP, MTLL…MLFM, IMLS…WMII, ITLA…YMRL, and LPML…ITLL.

It belongs to the complex I subunit 2 family. In terms of assembly, core subunit of respiratory chain NADH dehydrogenase (Complex I) which is composed of 45 different subunits. Interacts with TMEM242.

The protein localises to the mitochondrion inner membrane. It carries out the reaction a ubiquinone + NADH + 5 H(+)(in) = a ubiquinol + NAD(+) + 4 H(+)(out). Core subunit of the mitochondrial membrane respiratory chain NADH dehydrogenase (Complex I) which catalyzes electron transfer from NADH through the respiratory chain, using ubiquinone as an electron acceptor. Essential for the catalytic activity and assembly of complex I. The chain is NADH-ubiquinone oxidoreductase chain 2 from Saccopteryx leptura (Lesser sac-winged bat).